We begin with the raw amino-acid sequence, 309 residues long: Homoserine O-succinyltransferase (309 aa).

Catalysis depends on cysteine 142, which acts as the Acyl-thioester intermediate. Substrate is bound by residues lysine 163 and serine 192. Histidine 235 (proton acceptor) is an active-site residue. Glutamate 237 is an active-site residue. A substrate-binding site is contributed by arginine 249.

This sequence belongs to the MetA family. In terms of assembly, homodimer.

It is found in the cytoplasm. The catalysed reaction is L-homoserine + succinyl-CoA = O-succinyl-L-homoserine + CoA. It participates in amino-acid biosynthesis; L-methionine biosynthesis via de novo pathway; O-succinyl-L-homoserine from L-homoserine: step 1/1. Transfers a succinyl group from succinyl-CoA to L-homoserine, forming succinyl-L-homoserine. In Escherichia fergusonii (strain ATCC 35469 / DSM 13698 / CCUG 18766 / IAM 14443 / JCM 21226 / LMG 7866 / NBRC 102419 / NCTC 12128 / CDC 0568-73), this protein is Homoserine O-succinyltransferase.